The sequence spans 291 residues: Probable peptide ABC transporter permease protein y4tQ (291 aa).

A run of 5 helical transmembrane segments spans residues 28–48, 92–112, 137–157, 213–233, and 249–269; these read LVLLGGGILLLLILLALAAPL, LIVGLLSAVCAAVCGLLIGVI, LLAIALLSLTGPGIGILIVAI, ATVCASAIMTEAGLSFIGVGV, and LFLAIAPLTIFAPGLCLAVTV. The ABC transmembrane type-1 domain occupies 88–276; that stretch reads ARISLIVGLL…VTVLAVNLLG (189 aa).

It belongs to the binding-protein-dependent transport system permease family. OppBC subfamily.

The protein localises to the cell inner membrane. In terms of biological role, probably part of the binding-protein-dependent transport system y4tOPQRS for a peptide. Probably responsible for the translocation of the substrate across the membrane. This is Probable peptide ABC transporter permease protein y4tQ from Sinorhizobium fredii (strain NBRC 101917 / NGR234).